A 425-amino-acid chain; its full sequence is NAC transcription factor ONAC010 (425 aa).

Polar residues predominate over residues 1-10 (MESPDSSSGS). Residues 1–34 (MESPDSSSGSAPPRVLRRQQQQPGSAPELPPGFR) form a disordered region. Low complexity predominate over residues 12–23 (PPRVLRRQQQQP). In terms of domain architecture, NAC spans 29-200 (LPPGFRFHPT…DWVLCRIYKK (172 aa)). Residues 129-206 (VGVKKALVFY…IYKKTNKAGA (78 aa)) mediate DNA binding.

It is found in the nucleus. Its function is as follows. Transcription factor of the NAC family associated with male fertility. The chain is NAC transcription factor ONAC010 (ONAC010) from Oryza sativa subsp. indica (Rice).